The sequence spans 421 residues: General transcription factor IIH subunit 2 (421 aa).

Positions 1 to 26 (MSNQRKRSNDEREEEDDEDAEGIGEW) are disordered. The span at 11–24 (EREEEDDEDAEGIG) shows a compositional bias: acidic residues. Residues 83-272 (YLYIVIDFSR…IAEFAIANLI (190 aa)) enclose the VWFA domain. The segment at 362–408 (CFGCQQSLIGAGNKPVPCVTCRKCKHYFCLDCDIYIHESLHNCPGCE) adopts an RING-type zinc-finger fold.

This sequence belongs to the GTF2H2 family. As to quaternary structure, component of the 7-subunit TFIIH core complex composed of XPB, XPD, TFB1/GTF2H1, GTF2H2/P44, TFB4/GTF2H3, TFB2/GTF2H4 and TFB5/GTF2H5, which is active in NER. The core complex associates with the 3-subunit CDK-activating kinase (CAK) module composed of CYCH1/cyclin H1, CDKD and MAT1/At4g30820 to form the 10-subunit holoenzyme (holo-TFIIH) active in transcription. Interacts with XPD.

The protein resides in the nucleus. Functionally, component of the general transcription and DNA repair factor IIH (TFIIH) core complex, which is involved in general and transcription-coupled nucleotide excision repair (NER) of damaged DNA and, when complexed to CAK, in RNA transcription by RNA polymerase II. In NER, TFIIH acts by opening DNA around the lesion to allow the excision of the damaged oligonucleotide and its replacement by a new DNA fragment. In transcription, TFIIH has an essential role in transcription initiation. When the pre-initiation complex (PIC) has been established, TFIIH is required for promoter opening and promoter escape. Phosphorylation of the C-terminal tail (CTD) of the largest subunit of RNA polymerase II by the kinase module CAK controls the initiation of transcription. Can restore UV resistance in the NER-deficient ssl1-1 yeast mutant. In Arabidopsis thaliana (Mouse-ear cress), this protein is General transcription factor IIH subunit 2.